A 313-amino-acid chain; its full sequence is DNA-directed RNA polymerase subunit alpha (313 aa).

Residues 1 to 226 form an alpha N-terminal domain (alpha-NTD) region; it reads MLEIEKPKIE…EHMRLFLGLT (226 aa). Positions 242–313 are alpha C-terminal domain (alpha-CTD); that stretch reads TRDRLMDMSI…LGLSLRSSEE (72 aa).

The protein belongs to the RNA polymerase alpha chain family. As to quaternary structure, homodimer. The RNAP catalytic core consists of 2 alpha, 1 beta, 1 beta' and 1 omega subunit. When a sigma factor is associated with the core the holoenzyme is formed, which can initiate transcription.

It carries out the reaction RNA(n) + a ribonucleoside 5'-triphosphate = RNA(n+1) + diphosphate. Its function is as follows. DNA-dependent RNA polymerase catalyzes the transcription of DNA into RNA using the four ribonucleoside triphosphates as substrates. The protein is DNA-directed RNA polymerase subunit alpha of Moorella thermoacetica (strain ATCC 39073 / JCM 9320).